The sequence spans 316 residues: Probable cell division protein WhiA (316 aa).

Residues 275–309 (TLKELGEMVSGGKISKSGINHRLRKIDEIAEKLRA) constitute a DNA-binding region (H-T-H motif).

This sequence belongs to the WhiA family.

Its function is as follows. Involved in cell division and chromosome segregation. This is Probable cell division protein WhiA from Bacillus mycoides (strain KBAB4) (Bacillus weihenstephanensis).